We begin with the raw amino-acid sequence, 426 residues long: Amino acid transporter AVT1H (426 aa).

The next 11 membrane-spanning stretches (helical) occupy residues 34–54 (SFLHSVINMVGMLIGLGQLSM), 55–75 (PYAVESGGWMSIFLLISFGIL), 110–130 (LIVCLFIYLEIFMALVSYTIS), 148–168 (HFPAAKLTAVAVAIALPSLWI), 182–202 (ILMSAIIFGSVVYTAIFGGVI), 215–235 (IPTVSGIYLFSFGGHIVFPNL), 248–268 (VSIVSFATVTALYGALAITGA), 292–312 (IALWATVLTPMTKYALEFAPL), 340–360 (LLLVILALALTVPYFGYVLSL), 363–383 (SLVSVTIAVTLPSAFYLKICW), and 392–412 (AANLGFVVLGCVLGVLGSFES).

The protein belongs to the amino acid/polyamine transporter 2 family. Amino acid/auxin permease (AAAP) (TC 2.A.18.5) subfamily.

It localises to the membrane. This Arabidopsis thaliana (Mouse-ear cress) protein is Amino acid transporter AVT1H.